The sequence spans 2136 residues: Methylcytosine dioxygenase TET1 (2136 aa).

Basic residues-rich tracts occupy residues 1-12 (MSRSRHARPSRL) and 20-31 (KKKKNSQLRKTT). Residues 1-47 (MSRSRHARPSRLVRKEDVNKKKKNSQLRKTTKGANKNVASVKTLSPG) are disordered. A compositionally biased stretch (polar residues) spans 32–43 (KGANKNVASVKT). Residues 528 to 674 (LGIAQLSQAG…NGPKSESMDY (147 aa)) form a sufficient for binding to genomic CpG islands region. The CXXC-type zinc finger occupies 584–625 (EKKKRKRCGVCEPCQQKTNCGECTYCKNRKNSHQICKKRKCE). Residues cysteine 591, cysteine 594, cysteine 597, cysteine 603, cysteine 606, cysteine 609, cysteine 619, and cysteine 624 each coordinate Zn(2+). 3 stretches are compositionally biased toward basic and acidic residues: residues 712–724 (QNKK…HVKG), 732–743 (EAEKSKNSEVDK), and 849–869 (IHNE…EPKD). Disordered regions lie at residues 712–746 (QNKK…KKRT), 849–876 (IHNE…VQPS), 899–923 (QLSE…EQRT), and 1119–1169 (EKGT…VSYQ). Residue serine 871 is modified to Phosphoserine. Low complexity predominate over residues 901–911 (SEAPSENSSPS). Residues 1119-1139 (EKGTIQQKPPSSVHNNHGSSL) are compositionally biased toward polar residues. Residues 1146–1163 (TQKKTKSTPSRDRRKKKP) show a composition bias toward basic residues. Zn(2+) contacts are provided by cysteine 1422, cysteine 1424, cysteine 1482, histidine 1508, and cysteine 1510. Arginine 1551 contacts 2-oxoglutarate. Zn(2+) is bound by residues cysteine 1561, cysteine 1563, cysteine 1579, and cysteine 1588. The tract at residues 1580–1593 (SWSMYFNGCKFGRS) is interaction with DNA. Lysine 1589 participates in a covalent cross-link: Glycyl lysine isopeptide (Lys-Gly) (interchain with G-Cter in ubiquitin). Zn(2+) is bound at residue cysteine 1648. Cysteine 1664 contributes to the 2-oxoglutarate binding site. Position 1670 (histidine 1670) interacts with Zn(2+). Residues histidine 1672 and aspartate 1674 each coordinate Fe cation. Position 1677 (asparagine 1677) interacts with substrate. Histidine 1706 provides a ligand contact to 2-oxoglutarate. Disordered regions lie at residues 1774 to 1897 (EKKP…AAAD) and 1919 to 1984 (EPLI…SPAE). A compositionally biased stretch (low complexity) spans 1786–1800 (NSTTTNNSKPSSLPT). Polar residues-rich tracts occupy residues 1824-1833 (SSDNTKTYSL) and 1937-1953 (HQPN…QDLA). Over residues 1957–1976 (MEEDEQHSEADEPPSDEPLS) the composition is skewed to acidic residues. Histidine 2028 serves as a coordination point for Fe cation. 2043–2045 (RLS) serves as a coordination point for 2-oxoglutarate. Substrate is bound at residue 2049 to 2051 (YQH). Position 2059 (histidine 2059) interacts with Zn(2+). Residues 2074–2087 (KNKKMKASEQKDQA) show a composition bias toward basic and acidic residues. Residues 2074–2100 (KNKKMKASEQKDQAANEGPEQSSEVNE) form a disordered region.

This sequence belongs to the TET family. Interacts with SIN3A; recruits the transcriptional corepressor SIN3A to gene promoters. Interacts with HCFC1. Interacts (via C-terminus) with OGT. Found in a complex composed of at least SINHCAF, SIN3A, HDAC1, SAP30, RBBP4, OGT and TET1. Interacts with QSER1. Interacts with NONO (via DNA-binding domain); this interaction recruits TET1 to genomic loci. Interacts with FOXA2; this interaction may recruit TET1 to specific enhancers to preserve their unmethylated status and hence allowing gene expression. Interacts with RNF2. Directly interacts (via C-terminus) with the DCAF1 component of the CRL4(VprBP) E3 ubiquitin-protein ligase complex. As to quaternary structure, interacts with UHRF1; this interaction induces the recruitment of TET1 to replicating heterochromatin. Interacts with DCAF1. It depends on Fe(2+) as a cofactor. Requires Zn(2+) as cofactor. In terms of processing, glycosylated. Interaction with OGT leads to GlcNAcylation. Monoubiquitinated at Lys-1589 by the DCX (DDB1-CUL4-X-box) E3 ubiquitin-protein ligase complex called CRL4(VprBP) or CUL4A-RBX1-DDB1-DCAF1/VPRBP complex; this modification promotes binding to DNA. Expressed in fetal heart, lung and brain, and in adult skeletal muscle, thymus and ovary. Not detected in adult heart, lung or brain. Up-regulated in glioblastoma cells (at protein level). In terms of tissue distribution, expressed in embryonic stem cells (at protein level).

Its subcellular location is the nucleus. It is found in the chromosome. The catalysed reaction is a 5-methyl-2'-deoxycytidine in DNA + 2-oxoglutarate + O2 = a 5-hydroxymethyl-2'-deoxycytidine in DNA + succinate + CO2. It catalyses the reaction a 5-hydroxymethyl-2'-deoxycytidine in DNA + 2-oxoglutarate + O2 = a 5-formyl-2'-deoxycytidine in DNA + succinate + CO2 + H2O. The enzyme catalyses a 5-formyl-2'-deoxycytidine in DNA + 2-oxoglutarate + O2 = a 5-carboxyl-2'-deoxycytidine in DNA + succinate + CO2 + H(+). Its function is as follows. Dioxygenase that plays a key role in active DNA demethylation, by catalyzing the sequential oxidation of the modified genomic base 5-methylcytosine (5mC) into 5-hydroxymethylcytosine (5hmC), 5-formylcytosine (5fC), and 5-carboxylcytosine (5caC). In addition to its role in DNA demethylation, plays a more general role in chromatin regulation by recruiting histone modifying protein complexes to alter histone marks and chromatin accessibility, leading to both activation and repression of gene expression. Plays therefore a role in many biological processes, including stem cell maintenance, T- and B-cell development, inflammation regulation, genomic imprinting, neural activity or DNA repair. Involved in the balance between pluripotency and lineage commitment of cells and plays a role in embryonic stem cells maintenance and inner cell mass cell specification. Together with QSER1, plays an essential role in the protection and maintenance of transcriptional and developmental programs to inhibit the binding of DNMT3A/3B and therefore de novo methylation. May play a role in pancreatic beta-cell specification during development. In this context, may function as an upstream epigenetic regulator of PAX4 presumably through direct recruitment by FOXA2 to a PAX4 enhancer to preserve its unmethylated status, thereby potentiating PAX4 expression to adopt beta-cell fate during endocrine lineage commitment. Under DNA hypomethylation conditions, such as in female meiotic germ cells, may induce epigenetic reprogramming of pericentromeric heterochromatin (PCH), the constitutive heterochromatin of pericentromeric regions. PCH forms chromocenters in the interphase nucleus and chromocenters cluster at the prophase of meiosis. In this context, may also be essential for chromocenter clustering in a catalytic activity-independent manner, possibly through the recruitment polycomb repressive complex 1 (PRC1) to the chromocenters. During embryonic development, may be required for normal meiotic progression in oocytes and meiotic gene activation. Binds preferentially to DNA containing cytidine-phosphate-guanosine (CpG) dinucleotides over CpH (H=A, T, and C), hemimethylated-CpG and hemimethylated-hydroxymethyl-CpG. Dioxygenase that plays a key role in active DNA demethylation. Binds to promoters, particularly to those with high CG content. In hippocampal neurons, isoform 1 regulates the expression of a unique subset of genes compared to isoform 2, although some overlap exists between both isoforms, hence differentially regulates excitatory synaptic transmission. In hippocampal neuron cell cultures, isoform 1 controls both miniature excitatory postsynaptic current amplitude and frequency. Isoform 1 may regulate genes involved in hippocampal-dependent memory, leading to positive regulation of memory, contrary to isoform 2 that may decrease memory. In terms of biological role, dioxygenase that plays a key role in active DNA demethylation. As isoform 1, binds to promoters, particularly to those with high CG content, however displays reduced global chromatin affinity compared with isoform 1, leading to decreased global DNA demethylation compared with isoform 1. Contrary to isoform 1, isoform 2 localizes during S phase to sites of ongoing DNA replication in heterochromatin, causing a significant de novo 5hmC formation, globally, and more so in heterochromatin, including LINE 1 interspersed DNA repeats leading to their activation. In hippocampal neurons, isoform 2 regulates the expression of a unique subset of genes compared to isoform 1, although some overlap between both isoforms, hence differentially regulates excitatory synaptic transmission. In hippocampal neuron cell cultures, isoform 2 controls miniature excitatory postsynaptic current frequency, but not amplitude. Isoform 2 may regulate genes involved in hippocampal-dependent memory, leading to negative regulation of memory, contrary to isoform 1 that may improve memory. In immature and partially differentiated gonadotrope cells, directly represses luteinizing hormone gene LHB expression and does not catalyze 5hmC at the gene promoter. This chain is Methylcytosine dioxygenase TET1, found in Homo sapiens (Human).